A 64-amino-acid polypeptide reads, in one-letter code: DNA gyrase inhibitor YacG (64 aa).

Zn(2+) is bound by residues Cys6, Cys9, Cys25, and Cys29.

Belongs to the DNA gyrase inhibitor YacG family. In terms of assembly, interacts with GyrB. The cofactor is Zn(2+).

In terms of biological role, inhibits all the catalytic activities of DNA gyrase by preventing its interaction with DNA. Acts by binding directly to the C-terminal domain of GyrB, which probably disrupts DNA binding by the gyrase. This Haemophilus influenzae (strain ATCC 51907 / DSM 11121 / KW20 / Rd) protein is DNA gyrase inhibitor YacG.